We begin with the raw amino-acid sequence, 81 residues long: Photosystem I iron-sulfur center (81 aa).

4Fe-4S ferredoxin-type domains are found at residues 2 to 31 and 39 to 68; these read SHSVKIYDTCIGCTQCVRACPTDVLEMIPW and IAPAPRTEDCVGCKRCESACPTDFLSVRVY. Residues Cys11, Cys14, Cys17, Cys21, Cys48, Cys51, Cys54, and Cys58 each contribute to the [4Fe-4S] cluster site.

The eukaryotic PSI reaction center is composed of at least 11 subunits. It depends on [4Fe-4S] cluster as a cofactor.

It localises to the plastid. Its subcellular location is the chloroplast thylakoid membrane. It catalyses the reaction reduced [plastocyanin] + hnu + oxidized [2Fe-2S]-[ferredoxin] = oxidized [plastocyanin] + reduced [2Fe-2S]-[ferredoxin]. Functionally, apoprotein for the two 4Fe-4S centers FA and FB of photosystem I (PSI); essential for photochemical activity. FB is the terminal electron acceptor of PSI, donating electrons to ferredoxin. The C-terminus interacts with PsaA/B/D and helps assemble the protein into the PSI complex. Required for binding of PsaD and PsaE to PSI. PSI is a plastocyanin-ferredoxin oxidoreductase, converting photonic excitation into a charge separation, which transfers an electron from the donor P700 chlorophyll pair to the spectroscopically characterized acceptors A0, A1, FX, FA and FB in turn. The polypeptide is Photosystem I iron-sulfur center (Drimys granadensis).